An 80-amino-acid polypeptide reads, in one-letter code: Putative membrane protein insertion efficiency factor (80 aa).

A disordered region spans residues Lys61–Glu80. Residues Thr62–Glu80 show a composition bias toward basic and acidic residues.

Belongs to the UPF0161 family.

The protein resides in the cell membrane. Functionally, could be involved in insertion of integral membrane proteins into the membrane. This chain is Putative membrane protein insertion efficiency factor, found in Streptococcus pneumoniae (strain CGSP14).